We begin with the raw amino-acid sequence, 150 residues long: D-aminoacyl-tRNA deacylase (150 aa).

The Gly-cisPro motif, important for rejection of L-amino acids motif lies at 138–139 (GP).

It belongs to the DTD family. In terms of assembly, homodimer.

It localises to the cytoplasm. It catalyses the reaction glycyl-tRNA(Ala) + H2O = tRNA(Ala) + glycine + H(+). It carries out the reaction a D-aminoacyl-tRNA + H2O = a tRNA + a D-alpha-amino acid + H(+). Its function is as follows. An aminoacyl-tRNA editing enzyme that deacylates mischarged D-aminoacyl-tRNAs. Also deacylates mischarged glycyl-tRNA(Ala), protecting cells against glycine mischarging by AlaRS. Acts via tRNA-based rather than protein-based catalysis; rejects L-amino acids rather than detecting D-amino acids in the active site. By recycling D-aminoacyl-tRNA to D-amino acids and free tRNA molecules, this enzyme counteracts the toxicity associated with the formation of D-aminoacyl-tRNA entities in vivo and helps enforce protein L-homochirality. This is D-aminoacyl-tRNA deacylase from Porphyromonas gingivalis (strain ATCC 33277 / DSM 20709 / CIP 103683 / JCM 12257 / NCTC 11834 / 2561).